Reading from the N-terminus, the 256-residue chain is Venom allergen-1 (256 aa).

The N-terminal stretch at 1 to 21 (MAFNGIALLITATIFIGSCYA) is a signal peptide. Positions 65–211 (LNTHNKLRAE…MINYYLVCNY (147 aa)) constitute an SCP domain. N-linked (GlcNAc...) asparagine glycosylation is found at Asn-146 and Asn-210.

It belongs to the CRISP family.

The protein localises to the secreted. Its function is as follows. Activates autophagy in human monocytic cells, dendritic cells and macrophages. (Microbial infection) Promotes Zika virus replication in human dendritic cells and macrophages. Facilitates Zika virus transmission from infected mosquitoes to the host in mouse model. The sequence is that of Venom allergen-1 from Aedes albopictus (Asian tiger mosquito).